Consider the following 238-residue polypeptide: Probable 2-phosphosulfolactate phosphatase (238 aa).

The protein belongs to the ComB family. Mg(2+) serves as cofactor.

The enzyme catalyses (2R)-O-phospho-3-sulfolactate + H2O = (2R)-3-sulfolactate + phosphate. This chain is Probable 2-phosphosulfolactate phosphatase, found in Clostridium botulinum (strain Alaska E43 / Type E3).